We begin with the raw amino-acid sequence, 185 residues long: Large ribosomal subunit protein uL5 (185 aa).

It belongs to the universal ribosomal protein uL5 family. Part of the 50S ribosomal subunit; part of the 5S rRNA/L5/L18/L25 subcomplex. Contacts the 5S rRNA and the P site tRNA. Forms a bridge to the 30S subunit in the 70S ribosome.

This is one of the proteins that bind and probably mediate the attachment of the 5S RNA into the large ribosomal subunit, where it forms part of the central protuberance. In the 70S ribosome it contacts protein S13 of the 30S subunit (bridge B1b), connecting the 2 subunits; this bridge is implicated in subunit movement. Contacts the P site tRNA; the 5S rRNA and some of its associated proteins might help stabilize positioning of ribosome-bound tRNAs. The sequence is that of Large ribosomal subunit protein uL5 from Phocaeicola vulgatus (strain ATCC 8482 / DSM 1447 / JCM 5826 / CCUG 4940 / NBRC 14291 / NCTC 11154) (Bacteroides vulgatus).